Consider the following 574-residue polypeptide: Probable inactive serine/threonine-protein kinase slob2 (574 aa).

The chain crosses the membrane as a helical span at residues 6 to 26 (YIIIAAVGGFAILTFIIIVVL). A Protein kinase domain is found at 166–346 (YADRGSLRDF…PLHRLTYTSR (181 aa)). An N-linked (GlcNAc...) asparagine glycan is attached at Asn358. The segment at 366–386 (SKPNSKDLSQPKLKDLKKQKK) is disordered. Asn440, Asn449, Asn453, Asn456, Asn464, Asn470, Asn477, and Asn483 each carry an N-linked (GlcNAc...) asparagine glycan. Over residues 450–493 (TTTNTTNTSTSSSLNSSFNSNVSTSYSNATTTTNTTSASSVSPP) the composition is skewed to low complexity. The tract at residues 450-574 (TTTNTTNTST…DKSGPLLKKS (125 aa)) is disordered. Residues 494-539 (ISSPPPPPPPPPPSKSSGPPPPPPPPPKSSGPPPPPPPKSSPPPPA) are compositionally biased toward pro residues. Residues 546–556 (LLSSIESFSSS) are compositionally biased toward low complexity.

It belongs to the protein kinase superfamily. Ser/Thr protein kinase family.

The protein localises to the membrane. The polypeptide is Probable inactive serine/threonine-protein kinase slob2 (slob2) (Dictyostelium discoideum (Social amoeba)).